The primary structure comprises 565 residues: NAD-dependent malic enzyme (565 aa).

The Proton donor role is filled by Y104. Residue R157 participates in NAD(+) binding. The Proton acceptor role is filled by K175. E246, D247, and D270 together coordinate a divalent metal cation. Residues D270 and N418 each contribute to the NAD(+) site.

Belongs to the malic enzymes family. Homotetramer. Mg(2+) is required as a cofactor. The cofactor is Mn(2+).

The enzyme catalyses (S)-malate + NAD(+) = pyruvate + CO2 + NADH. It carries out the reaction oxaloacetate + H(+) = pyruvate + CO2. This Escherichia coli O139:H28 (strain E24377A / ETEC) protein is NAD-dependent malic enzyme.